The following is a 1001-amino-acid chain: ATP-dependent DNA/RNA helicase DHX36 (1001 aa).

Residues 1–44 are required for recruitment to cytoplasmic stress granules; sequence MSYDYHQSWSRDGGPRGSGQGSSGGGGGGSRGSGGGGGGRGGRG. The segment at 1 to 54 is disordered; sequence MSYDYHQSWSRDGGPRGSGQGSSGGGGGGSRGSGGGGGGRGGRGRHPAHLKGRE. The interval 1 to 97 is required for the pre-miR-134 transport; the sequence is MSYDYHQSWS…IVQLLNSVQA (97 aa). The necessary for nuclear and nucleolar caps localizations stretch occupies residues 1 to 193; sequence MSYDYHQSWS…KKTDPRYIEM (193 aa). Residues 15–41 are compositionally biased toward gly residues; that stretch reads PRGSGQGSSGGGGGGSRGSGGGGGGRG. The segment at 46-68 is DSM (DHX36-specific motif); that stretch reads HPAHLKGREIGLWYAKKQTQKNK. The required for G4-DNA- and G4-RNA-binding stretch occupies residues 46–98; that stretch reads HPAHLKGREIGLWYAKKQTQKNKEAERQERAVVHMDERREEQIVQLLNSVQAK. RecA-like domain regions lie at residues 99 to 379 and 380 to 621; these read TDKD…MIHI and PGFT…DYQL. The stretch at 120–147 forms a coiled coil; it reads EVSSEKKINSEKKLDNQEKKLLNQEKKT. A Phosphoserine modification is found at serine 154. One can recognise a Helicase ATP-binding domain in the interval 210–380; sequence VNLINNHQVT…FGNCPMIHIP (171 aa). Residue 226–231 participates in ATP binding; the sequence is GCGKTT. The tract at residues 258–310 is necessary for interaction with single-stranded DNA at the 3'-end of the G4-DNA structure; the sequence is RRISAISVAERVATERAESCGNGNSTGYQIRLQSRLPRKQGSILYCTTGIILQ. The DEAH box signature appears at 327-330; sequence DEIH. Mg(2+)-binding residues include glutamate 328 and histidine 330. The region spanning 470-640 is the Helicase C-terminal domain; it reads ALIRYIVLEE…ELCLQIKILR (171 aa). A necessary for interaction with single-stranded DNA at the 3'-end of the G4-DNA structure region spans residues 491–550; the sequence is WDNISTLHDLLMSQVMFKSDKFLIIPLHSLMPTVNQTQVFKKTPPGVRKIVIATNIAETS. Positions 510–521 match the Nuclear localization signal motif; sequence DKFLIIPLHSLM. ATP-binding positions include serine 550 and 595 to 598; that span reads RAGR. The tract at residues 622-691 is WH domain; that stretch reads PEILRTPLEE…LGVHLARLPV (70 aa). Necessary for interaction with single-stranded DNA at the 3'-end of the G4-DNA structure regions lie at residues 631–690, 842–853, and 863–893; these read ELCL…ARLP, NLGKKRKMVKVH, and HPKS…IYLY. An OB-fold-like subdomains region spans residues 834–898; the sequence is PKVAKIRLNL…SIYLYDCTEV (65 aa). At lysine 940 the chain carries N6-acetyllysine. Serine 956 carries the phosphoserine modification.

It belongs to the DEAD box helicase family. DEAH subfamily. Found in a multi-helicase-TICAM1 complex at least composed of DHX36, DDX1, DDX21 and TICAM1; this complex exists in resting cells with or without dsRNA poly(I:C) ligand stimulation. Interacts (via C-terminus) with TICAM1 (via TIR domain). Interacts (via C-terminus) with DDX21; this interaction serves as bridges to TICAM1. Interacts with TERT; this interaction is dependent on the ability of DHX36 to bind to the G-quadruplex RNA (G4-RNA) structure present in the telomerase RNA template component (TERC). Interacts with DKC1; this interaction is dependent on the ability of DHX36 to bind to the G4-RNA structure present in TERC. Interacts with PARN; this interaction stimulates PARN to enhance uPA mRNA decay. Interacts with EXOSC3; this interaction occurs in a RNase-insensitive manner. Interacts with EXOSC10; this interaction occurs in a RNase-insensitive manner. Interacts with ILF3; this interaction occurs in a RNA-dependent manner. Interacts with ELAVL1; this interaction occurs in an RNA-dependent manner. Interacts with DDX5; this interaction occurs in a RNA-dependent manner. Interacts with DDX17; this interaction occurs in a RNA-dependent manner. Interacts with HDAC1; this interaction occurs in a RNA-dependent manner. Interacts with HDAC3; this interaction occurs in a RNA-dependent manner. Interacts with HDAC4. Interacts with AGO1. Interacts with AGO2. Interacts with ERCC6. Mg(2+) serves as cofactor. Expressed in spermatogonia stem cells and primary spermatocytes (at protein level). Expressed strongly in testis. Weakly expressed in heart, lung, liver, kidney, small intestine, spleen, lymphe node and thymus.

The protein resides in the nucleus. It localises to the cytoplasm. It is found in the cytosol. The protein localises to the stress granule. Its subcellular location is the nucleus speckle. The protein resides in the chromosome. It localises to the telomere. It is found in the mitochondrion. The protein localises to the perikaryon. Its subcellular location is the cell projection. The protein resides in the dendrite. It localises to the axon. It catalyses the reaction ATP + H2O = ADP + phosphate + H(+). ATPase activity is enhanced in the presence of homomeric poly(U) RNAs, but not by double-stranded DNA (dsDNA), double-stranded RNA (dsRNA) and tRNA. In terms of biological role, multifunctional ATP-dependent helicase that unwinds G-quadruplex (G4) structures. Plays a role in many biological processes such as genomic integrity, gene expression regulations and as a sensor to initiate antiviral responses. G4 structures correspond to helical structures containing guanine tetrads. Binds with high affinity to and unwinds G4 structures that are formed in nucleic acids (G4-DNA and G4-RNA). Plays a role in genomic integrity. Converts the G4-RNA structure present in telomerase RNA template component (TREC) into a double-stranded RNA to promote P1 helix formation that acts as a template boundary ensuring accurate reverse transcription. Plays a role in transcriptional regulation. Resolves G4-DNA structures in promoters of genes, such as YY1, KIT/c-kit and ALPL and positively regulates their expression. Plays a role in post-transcriptional regulation. Unwinds a G4-RNA structure located in the 3'-UTR polyadenylation site of the pre-mRNA TP53 and stimulates TP53 pre-mRNA 3'-end processing in response to ultraviolet (UV)-induced DNA damage. Binds to the precursor-microRNA-134 (pre-miR-134) terminal loop and regulates its transport into the synapto-dendritic compartment. Involved in the pre-miR-134-dependent inhibition of target gene expression and the control of dendritic spine size. Plays a role in the regulation of cytoplasmic mRNA translation and mRNA stability. Binds to both G4-RNA structures and alternative non-quadruplex-forming sequence within the 3'-UTR of the PITX1 mRNA regulating negatively PITX1 protein expression. Binds to both G4-RNA structure in the 5'-UTR and AU-rich elements (AREs) localized in the 3'-UTR of NKX2-5 mRNA to either stimulate protein translation or induce mRNA decay in an ELAVL1-dependent manner, respectively. Also binds to ARE sequences present in several mRNAs mediating exosome-mediated 3'-5' mRNA degradation. Involved in cytoplasmic urokinase-type plasminogen activator (uPA) mRNA decay. Component of a multi-helicase-TICAM1 complex that acts as a cytoplasmic sensor of viral double-stranded RNA (dsRNA) and plays a role in the activation of a cascade of antiviral responses including the induction of pro-inflammatory cytokines via the adapter molecule TICAM1. Required for the early embryonic development and hematopoiesis. Involved in the regulation of cardioblast differentiation and proliferation during heart development. Involved in spermatogonia differentiation. May play a role in ossification. This chain is ATP-dependent DNA/RNA helicase DHX36, found in Mus musculus (Mouse).